A 300-amino-acid polypeptide reads, in one-letter code: 4-hydroxy-tetrahydrodipicolinate synthase (300 aa).

Thr53 contributes to the pyruvate binding site. Residue Tyr141 is the Proton donor/acceptor of the active site. The Schiff-base intermediate with substrate role is filled by Lys169. Thr211 serves as a coordination point for pyruvate.

The protein belongs to the DapA family. In terms of assembly, homotetramer; dimer of dimers.

It is found in the cytoplasm. It carries out the reaction L-aspartate 4-semialdehyde + pyruvate = (2S,4S)-4-hydroxy-2,3,4,5-tetrahydrodipicolinate + H2O + H(+). The protein operates within amino-acid biosynthesis; L-lysine biosynthesis via DAP pathway; (S)-tetrahydrodipicolinate from L-aspartate: step 3/4. Its function is as follows. Catalyzes the condensation of (S)-aspartate-beta-semialdehyde [(S)-ASA] and pyruvate to 4-hydroxy-tetrahydrodipicolinate (HTPA). The protein is 4-hydroxy-tetrahydrodipicolinate synthase of Rickettsia massiliae (strain Mtu5).